We begin with the raw amino-acid sequence, 141 residues long: Transcriptional regulator MraZ (141 aa).

SpoVT-AbrB domains follow at residues 5-47 and 76-119; these read TFNL…KPAD and ANLV…DKVQ.

Belongs to the MraZ family. Forms oligomers.

The protein localises to the cytoplasm. It is found in the nucleoid. This Mycoplasma genitalium (strain ATCC 33530 / DSM 19775 / NCTC 10195 / G37) (Mycoplasmoides genitalium) protein is Transcriptional regulator MraZ.